The chain runs to 389 residues: tRNA-specific 2-thiouridylase MnmA (389 aa).

ATP contacts are provided by residues 33-40 and Leu59; that span reads GLSGGVDS. Residue Cys120 is the Nucleophile of the active site. Cys120 and Cys219 are disulfide-bonded. An ATP-binding site is contributed by Gly145. The interaction with tRNA stretch occupies residues 169–171; the sequence is KDQ. The active-site Cysteine persulfide intermediate is the Cys219. The segment at 326–327 is interaction with tRNA; sequence RY.

Belongs to the MnmA/TRMU family.

It is found in the cytoplasm. The enzyme catalyses S-sulfanyl-L-cysteinyl-[protein] + uridine(34) in tRNA + AH2 + ATP = 2-thiouridine(34) in tRNA + L-cysteinyl-[protein] + A + AMP + diphosphate + H(+). Functionally, catalyzes the 2-thiolation of uridine at the wobble position (U34) of tRNA, leading to the formation of s(2)U34. In Synechococcus sp. (strain WH7803), this protein is tRNA-specific 2-thiouridylase MnmA.